A 505-amino-acid polypeptide reads, in one-letter code: Histidine ammonia-lyase (505 aa).

Positions 141–143 (ASG) form a cross-link, 5-imidazolinone (Ala-Gly). At Ser-142 the chain carries 2,3-didehydroalanine (Ser).

This sequence belongs to the PAL/histidase family. Contains an active site 4-methylidene-imidazol-5-one (MIO), which is formed autocatalytically by cyclization and dehydration of residues Ala-Ser-Gly.

The protein localises to the cytoplasm. It carries out the reaction L-histidine = trans-urocanate + NH4(+). The protein operates within amino-acid degradation; L-histidine degradation into L-glutamate; N-formimidoyl-L-glutamate from L-histidine: step 1/3. The protein is Histidine ammonia-lyase of Bacillus cereus (strain ZK / E33L).